Reading from the N-terminus, the 485-residue chain is Glutamate--tRNA ligase (485 aa).

Residue Arg6 participates in L-glutamate binding. Positions 9-19 (PSPTGNLHIGT) match the 'HIGH' region motif. L-glutamate contacts are provided by residues Tyr192 and 210 to 214 (RGEDH). Positions 248–252 (KLSKR) match the 'KMSKS' region motif. Lys251 provides a ligand contact to ATP.

Belongs to the class-I aminoacyl-tRNA synthetase family. Glutamate--tRNA ligase type 1 subfamily. In terms of assembly, monomer. Does not require zinc. serves as cofactor.

Its subcellular location is the cytoplasm. The enzyme catalyses tRNA(Glu) + L-glutamate + ATP = L-glutamyl-tRNA(Glu) + AMP + diphosphate. In terms of biological role, non-discriminating glutamyl-tRNA synthetase. Catalyzes the attachment of glutamate to tRNA(Glu) in a two-step reaction: glutamate is first activated by ATP to form Glu-AMP and then transferred to the acceptor end of tRNA(Glu). Acylates both tRNA(Glu) and tRNA(Gln) with glutamate, but has 13-fold higher efficiency with tRNA(Glu). This Thermosynechococcus vestitus (strain NIES-2133 / IAM M-273 / BP-1) protein is Glutamate--tRNA ligase (gltX).